The primary structure comprises 275 residues: Diaminopimelate epimerase (275 aa).

Residues Asn-20 and Asn-63 each contribute to the substrate site. The active-site Proton donor is the Cys-72. Substrate-binding positions include 73–74, Asn-179, and 197–198; these read GN and ER. The active-site Proton acceptor is Cys-207. 208–209 lines the substrate pocket; it reads GT.

This sequence belongs to the diaminopimelate epimerase family. As to quaternary structure, homodimer.

The protein localises to the cytoplasm. The enzyme catalyses (2S,6S)-2,6-diaminopimelate = meso-2,6-diaminopimelate. It functions in the pathway amino-acid biosynthesis; L-lysine biosynthesis via DAP pathway; DL-2,6-diaminopimelate from LL-2,6-diaminopimelate: step 1/1. Its function is as follows. Catalyzes the stereoinversion of LL-2,6-diaminopimelate (L,L-DAP) to meso-diaminopimelate (meso-DAP), a precursor of L-lysine and an essential component of the bacterial peptidoglycan. The protein is Diaminopimelate epimerase of Chlamydia trachomatis serovar A (strain ATCC VR-571B / DSM 19440 / HAR-13).